A 1129-amino-acid chain; its full sequence is ISWI chromatin-remodeling complex ATPase ISW1 (1129 aa).

The interval 144 to 177 is disordered; the sequence is KANGKGKGKHQDVRRRKTEHEEDAELLKEEDSDD. Over residues 147–160 the composition is skewed to basic residues; it reads GKGKGKHQDVRRRK. A compositionally biased stretch (acidic residues) spans 164 to 177; that stretch reads EEDAELLKEEDSDD. The 166-residue stretch at 208-373 folds into the Helicase ATP-binding domain; sequence VSLHKNKIAG…WALLNFLLPD (166 aa). Residue 221 to 228 participates in ATP binding; it reads DEMGLGKT. Positions 324–327 match the DEAH box motif; sequence DEAH. Positions 506–657 constitute a Helicase C-terminal domain; sequence VLDKLLKKLK…QLVIQQNRTS (152 aa). The disordered stretch occupies residues 683-705; sequence FKSGTSTGSAGTPEPGSGEKGDD. Position 694 is a phosphothreonine (Thr694). Ser846 carries the phosphoserine modification. 2 SANT domains span residues 882–935 and 988–1052; these read EGFT…SNIE and NKRT…LLQC. The segment covering 1073–1108 has biased composition (basic and acidic residues); sequence KEDENGKRIREEFADQTANEKENVDGVESKKAKIED. The segment at 1073–1129 is disordered; the sequence is KEDENGKRIREEFADQTANEKENVDGVESKKAKIEDTSNVGTEQLVAEKIPENETTH.

It belongs to the SNF2/RAD54 helicase family. ISWI subfamily. In terms of assembly, component of the ISW1A complex, which at least consists of ISW1 and IOC3. Component of the ISW1B complex, which at least consists of ISW1, IOC2 and IOC4.

Its subcellular location is the nucleus. Functionally, catalytic component of ISW1-type complexes, which act by remodeling the chromatin by catalyzing an ATP-dependent alteration in the structure of nucleosomal DNA. They are involved in coordinating transcriptional repression, activation and elongation phases. The ISW1A complex represses gene expression at initiation through specific positioning of a promoter proximal dinucleosome. The ISW1B complex acts within coding regions to control the amount of RNA polymerase II released into productive elongation and to coordinate elongation with termination and pre-mRNA processing. The sequence is that of ISWI chromatin-remodeling complex ATPase ISW1 (ISW1) from Saccharomyces cerevisiae (strain ATCC 204508 / S288c) (Baker's yeast).